Reading from the N-terminus, the 36-residue chain is Serum amyloid P-component (36 aa).

Residues serine 6–methionine 36 form the Pentraxin (PTX) domain.

Belongs to the pentraxin family. Homopentamer. Discoid arrangement of 5 covalently bound subunits. Ca(2+) serves as cofactor.

The protein localises to the secreted. The chain is Serum amyloid P-component from Salmo salar (Atlantic salmon).